Consider the following 329-residue polypeptide: Phosphoenolpyruvate transferase (329 aa).

Asp61 is a binding site for 7,8-didemethyl-8-hydroxy-5-deazariboflavin.

The protein belongs to the CofD family. In terms of assembly, homodimer. It depends on Mg(2+) as a cofactor.

The enzyme catalyses enolpyruvoyl-2-diphospho-5'-guanosine + 7,8-didemethyl-8-hydroxy-5-deazariboflavin = dehydro coenzyme F420-0 + GMP + H(+). Its pathway is cofactor biosynthesis; coenzyme F420 biosynthesis. Catalyzes the transfer of the phosphoenolpyruvate moiety from enoylpyruvoyl-2-diphospho-5'-guanosine (EPPG) to 7,8-didemethyl-8-hydroxy-5-deazariboflavin (FO) with the formation of dehydro coenzyme F420-0 and GMP. In Mycobacterium marinum (strain ATCC BAA-535 / M), this protein is Phosphoenolpyruvate transferase.